A 342-amino-acid chain; its full sequence is Ubiquitin fusion degradation protein 1 homolog (342 aa).

2 disordered regions span residues 245 to 276 and 318 to 342; these read FGGA…SNAA and EKEA…RGAR. Polar residues predominate over residues 259 to 275; that stretch reads SSSVSLSDGTGVSTSNA.

This sequence belongs to the UFD1 family. Forms a complex composed of ubxn-3, ufd-1, npl-4.1 and cdc-48.1; within the complex interacts with cdc-48.1. Interacts with cdc-48.2. Interacts with npl-4.1 and/or npl-4.2.

The protein resides in the cytoplasm. It localises to the nucleus. Its function is as follows. Functions at a post-ubiquitination step in the ubiquitin fusion degradation (UFD) pathway. In association with npl-4.1 and/or npl-4.2 and ATPase cdc-48.1 and/or cdc-48.2, involved in the cytoplasmic elimination of misfolded proteins exported from the ER. This pathway, known as ERAD, prevents the activation of the unfolded protein response (UPR) caused by the accumulation of misfolded proteins in the ER. During S phase and in association with npl-4.1 and/or npl-4.2, cdc-48.1 and/or cdc-48.2 and ubxn-3, ensures the degradation of DNA licensing factor cdt-1 after the initiation of DNA replication and thus the disassembly of the DNA replication CMG helicase complex by promoting the dissociation from chromatin of several of its components including cdc-45 and sld-5. Regulates ubxn-3 nuclear localization during S phase. In Caenorhabditis elegans, this protein is Ubiquitin fusion degradation protein 1 homolog (ufd-1).